A 1379-amino-acid chain; its full sequence is Protein three rows (1379 aa).

The separase cleavage-site stretch occupies residues 1031–1037; the sequence is VEPIRKQ. Disordered regions lie at residues 1206-1231, 1248-1309, and 1328-1379; these read PEDK…KQSA, PSAT…ATSK, and ITTS…RHRH. Positions 1213 to 1228 are enriched in polar residues; it reads ATGSVSAVKNTASKVK. Positions 1248 to 1267 are enriched in low complexity; the sequence is PSATSCSSSGGSGTENTPPS.

In terms of assembly, interacts with pim and Sse. Cleavage of thr contributes to inactivation of Sse. Post-translationally, proteolytically cleaved after the metaphase-to-anaphase transition, C-terminal cleavage product is degraded. Cleavage can only proceed within complexes that contain active Sse. During embryogenesis, expressed in Malpighian tubule buds, and epithelia of foregut and hindgut.

The protein localises to the cytoplasm. In terms of biological role, required specifically for chromosome disjunction during all mitoses; maternally provided protein is sufficient until mitosis 14 then zygotic protein is required. Involved in formation and/or maintenance of epithelial structures: bud extension during Malpighian tubule development, and foregut and hindgut morphogenesis. This chain is Protein three rows (thr), found in Drosophila melanogaster (Fruit fly).